A 781-amino-acid chain; its full sequence is Mitochondrial inner membrane m-AAA protease component paraplegin (781 aa).

The N-terminal 43 residues, 1–43 (MAAALLLLRGLRPGPEPRPRRLWGLLSGRGPGLSSGAGARRPY), are a transit peptide targeting the mitochondrion. Disordered regions lie at residues 22 to 56 (LWGL…AAAG) and 103 to 135 (TSRM…ERED). The span at 36–56 (GAGARRPYAARGTPVGPAAAG) shows a compositional bias: low complexity. Residues 44-105 (AARGTPVGPA…GSTLYFNTSR (62 aa)) constitute a propeptide, removed in mature form. The Mitochondrial matrix segment spans residues 106-144 (MKQKNKDNDKPKGKTPEDDEEEKRRKEREDQMYRERLRT). The span at 109–135 (KNKDNDKPKGKTPEDDEEEKRRKERED) shows a compositional bias: basic and acidic residues. A helical transmembrane segment spans residues 145 to 165 (LFIIALVMSLLNSLSTSGGSI). Topologically, residues 166 to 248 (SWADFVNEML…DRIPVSYKRT (83 aa)) are mitochondrial intermembrane. Residues 249 to 269 (GFFGNALYALGMTAVGLAILW) form a helical membrane-spanning segment. Residues 270 to 781 (YVFRLAGMTG…ASGEEEAPAP (512 aa)) are Mitochondrial matrix-facing. The ATP site is built by Ala-312, Gly-352, Cys-353, Gly-354, Lys-355, Thr-356, and Leu-357. The residue at position 505 (Tyr-505) is a 3'-nitrotyrosine. His-574 lines the Zn(2+) pocket. Residue Glu-575 is part of the active site. His-578 and Asp-650 together coordinate Zn(2+). The segment at 701 to 781 (HEAKLLVAKA…ASGEEEAPAP (81 aa)) is interaction with PPIF.

It in the N-terminal section; belongs to the AAA ATPase family. This sequence in the C-terminal section; belongs to the peptidase M41 family. Forms heterohexamers with SPG7 and AFG3L1. The m-AAA protease is either composed of homohexamers of AFG3L2 or heterohexamers of AFG3L1, AFG3L2 and/or SPG7. Component of the mitochondrial permeability transition pore complex (mPTPC), at least composed of SPG7, VDAC1 and PPIF. Interacts with MAIP1. Zn(2+) serves as cofactor. In terms of processing, upon import into the mitochondrion, the N-terminal transit peptide is cleaved by the mitochondrial-processing peptidase (MPP) to generate an intermediate form which undergoes a second proteolytic cleavage mediated by proteases AFG3L1 and/or AFG3L2 removing an additional N-terminal fragment to generate the proteolytically active mature form. Expressed in the brain and retina (at protein level).

The protein resides in the mitochondrion inner membrane. The catalysed reaction is ATP + H2O = ADP + phosphate + H(+). Its function is as follows. Catalytic component of the m-AAA protease, a protease that plays a key role in proteostasis of inner mitochondrial membrane proteins, and which is essential for axonal and neuron development. SPG7 possesses both ATPase and protease activities: the ATPase activity is required to unfold substrates, threading them into the internal proteolytic cavity for hydrolysis into small peptide fragments. The m-AAA protease exerts a dual role in the mitochondrial inner membrane: it mediates the processing of specific regulatory proteins and ensures protein quality control by degrading misfolded polypeptides. Mediates protein maturation of the mitochondrial ribosomal subunit MRPL32/bL32m by catalyzing the cleavage of the presequence of MRPL32/bL32m prior to assembly into the mitochondrial ribosome. Acts as a regulator of calcium in neurons by mediating degradation of SMDT1/EMRE before its assembly with the uniporter complex, limiting the availability of SMDT1/EMRE for MCU assembly and promoting efficient assembly of gatekeeper subunits with MCU. Also regulates mitochondrial calcium by catalyzing degradation of MCU. Plays a role in the formation and regulation of the mitochondrial permeability transition pore (mPTP) and its proteolytic activity is dispensable for this function. This is Mitochondrial inner membrane m-AAA protease component paraplegin from Mus musculus (Mouse).